We begin with the raw amino-acid sequence, 120 residues long: Large ribosomal subunit protein uL18 (120 aa).

Belongs to the universal ribosomal protein uL18 family. As to quaternary structure, part of the 50S ribosomal subunit; part of the 5S rRNA/L5/L18/L25 subcomplex. Contacts the 5S and 23S rRNAs.

Functionally, this is one of the proteins that bind and probably mediate the attachment of the 5S RNA into the large ribosomal subunit, where it forms part of the central protuberance. The protein is Large ribosomal subunit protein uL18 of Azorhizobium caulinodans (strain ATCC 43989 / DSM 5975 / JCM 20966 / LMG 6465 / NBRC 14845 / NCIMB 13405 / ORS 571).